A 265-amino-acid chain; its full sequence is tRNA pseudouridine synthase A (265 aa).

The active-site Nucleophile is D55. Y113 serves as a coordination point for substrate.

This sequence belongs to the tRNA pseudouridine synthase TruA family. Homodimer.

The enzyme catalyses uridine(38/39/40) in tRNA = pseudouridine(38/39/40) in tRNA. In terms of biological role, formation of pseudouridine at positions 38, 39 and 40 in the anticodon stem and loop of transfer RNAs. This chain is tRNA pseudouridine synthase A, found in Levilactobacillus brevis (strain ATCC 367 / BCRC 12310 / CIP 105137 / JCM 1170 / LMG 11437 / NCIMB 947 / NCTC 947) (Lactobacillus brevis).